The following is a 148-amino-acid chain: Putative HTH-type transcriptional regulator NMA1593 (148 aa).

One can recognise an HTH rrf2-type domain in the interval 2 to 131 (RLTTKGRFAV…GSVTLQSIIE (130 aa)).

The chain is Putative HTH-type transcriptional regulator NMA1593 from Neisseria meningitidis serogroup A / serotype 4A (strain DSM 15465 / Z2491).